Consider the following 750-residue polypeptide: MIIRSPEPEVKILVDRDPVKTSFEEWARPGHFSRTIAKGPDTTTWIWNLHADAHDFDSHTNDLEEISRKVFSAHFGQLSIIFLWLSGMYFHGARFSNYEAWLSDPTHIGPSAQVVWPIVGQEILNGDVGGGFRGIQITSGFFQIWRASGITSELQLYCTAIGALVFAALMLFAGWFHYHKAAPKLAWFQDVESMLNHHLAGLLGLGSLSWAGHQVHVSLPINQFLNAGVDPKEIPLPHEFILNRDLLAQLYPSFAEGATPFFTLNWSKYAEFLTFRGGLDPVTGGLWLTDIAHHHLAIAILFLIAGHMYKTNWGIGHDLKDILEAHKGPFTGEGHKGLYEILTTSWHAQLALNLAMLGSLTIVVAHHMYSMPPYPYLATDYGTQLSLFTHHMWIGGFLIVGAAAHAAIFMVRDYDPTTRYNDLLDRVLRHRDAIISHLNWVCIFLGFHSFGLYIHNDTMSALGRPQDMFSDTAIQLQPIFAQWIQNTHALAPSATAPGATAGTSLTWGGGDLVAVGGKVALLPIPLGTADFLVHHIHAFTIHVTVLILLKGVLFARSSRLIPDKANLGFRFPCDGPGRGGTCQVSAWDHVFLGLFWMYNAISVVIFHFSWKMQSDVWGSISDQGVVTHITGGNFAQSSITINGWLRDFLWAQSSQVIQSYGSSLSAYGLFFLGAHFVWAFSLMFLFSGRGYWQELIESIVWAHNKLKVAPATQPRALSIIQGRAVGVTHYLLGGIATTWAFFLARIISVG.

Helical transmembrane passes span 70–93, 156–179, 195–219, 291–309, 346–369, 385–411, 433–455, and 531–549; these read VFSA…FHGA, LYCT…FHYH, LNHH…HVSL, IAHH…GHMY, WHAQ…HHMY, LSLF…IFMV, AIIS…LYIH, and FLVH…LILL. [4Fe-4S] cluster is bound by residues Cys-573 and Cys-582. A run of 2 helical transmembrane segments spans residues 589-610 and 664-686; these read HVFL…HFSW and LSAY…MFLF. His-675 lines the chlorophyll a' pocket. Positions 683 and 691 each coordinate chlorophyll a. Trp-692 contacts phylloquinone. A helical membrane pass occupies residues 724–744; it reads AVGVTHYLLGGIATTWAFFLA.

It belongs to the PsaA/PsaB family. As to quaternary structure, the PsaA/B heterodimer binds the P700 chlorophyll special pair and subsequent electron acceptors. PSI consists of a core antenna complex that captures photons, and an electron transfer chain that converts photonic excitation into a charge separation. The eukaryotic PSI reaction center is composed of at least 11 subunits. The cofactor is P700 is a chlorophyll a/chlorophyll a' dimer, A0 is one or more chlorophyll a, A1 is one or both phylloquinones and FX is a shared 4Fe-4S iron-sulfur center..

The protein localises to the plastid. It is found in the chloroplast thylakoid membrane. It catalyses the reaction reduced [plastocyanin] + hnu + oxidized [2Fe-2S]-[ferredoxin] = oxidized [plastocyanin] + reduced [2Fe-2S]-[ferredoxin]. Its function is as follows. PsaA and PsaB bind P700, the primary electron donor of photosystem I (PSI), as well as the electron acceptors A0, A1 and FX. PSI is a plastocyanin-ferredoxin oxidoreductase, converting photonic excitation into a charge separation, which transfers an electron from the donor P700 chlorophyll pair to the spectroscopically characterized acceptors A0, A1, FX, FA and FB in turn. Oxidized P700 is reduced on the lumenal side of the thylakoid membrane by plastocyanin. The chain is Photosystem I P700 chlorophyll a apoprotein A1 from Nymphaea alba (White water-lily).